We begin with the raw amino-acid sequence, 731 residues long: E3 ubiquitin-protein ligase COP1 (731 aa).

Positions 1–40 are disordered; the sequence is MSGSRQAGSGSAGTSPGSSAASSVTSASSSLSSSPSPPSV. The Nuclear localization signal 1 motif lies at 109-113; it reads GSRKR. An RING-type zinc finger spans residues 136-174; it reads CPICFDMIEEAYMTKCGHSFCYKCIHQSLEDNNRCPKCN. The Nuclear localization signal 2 signature appears at 195–206; that stretch reads KQKQRFEEKRFK. Residues 233-301 adopt a coiled-coil conformation; that stretch reads LDLANVNLML…DIKRVEEMSG (69 aa). The Nuclear export signal signature appears at 235-245; that stretch reads LANVNLMLELL. Residues 305–325 form a disordered region; the sequence is PVSEDSTVPQFEAPSPSHSSI. WD repeat units follow at residues 419 to 458, 468 to 508, 511 to 551, 553 to 593, 597 to 635, 638 to 677, and 691 to 729; these read NGSS…QDAV, TCNS…RSKV, EHEK…SVAS, EAKA…QPIM, GHRK…CLRS, GHIN…TLLT, and RKED…KVLE. The segment at 643–645 is interaction with TRIB1; that stretch reads KNF.

It belongs to the COP1 family. In terms of assembly, homodimer. Homodimerization is mediated by the coiled coil domain. Component of the DCX DET1-COP1 ubiquitin ligase complex at least composed of RBX1, DET1, DDB1, CUL4A and COP1. Isoform 2 does not interact with CUL4A but still binds to RBX1, suggesting that the interaction may be mediated by another cullin protein. Isoform 1 and isoform 2 interact with CUL5 but not with CUL1, CUL2 not CUL3. Interacts with bZIP transcription factors JUN, JUNB and JUND but not with FOS, ATF2 nor XBP1. Interacts with p53 (TP53). Interacts with COPS6; this interaction stabilizes RFWD2 through reducing its auto-ubiquitination and decelerating its turnover rate. Interacts with SFN; this interaction leads to SFN degradation. Isoform 4 forms heterodimers with isoform 1, preventing its association with DET1. Interacts with p53/TP53 and MTA1. Interacts with TRIB1 (via C-terminus) and TRIB2. Autoubiquitinated. MTA1 destabilizes it by promoting its autoubiquitination. Ubiquitously expressed at low level. Expressed at higher level in testis, placenta, skeletal muscle and heart.

The protein localises to the nucleus speckle. It is found in the cytoplasm. It carries out the reaction S-ubiquitinyl-[E2 ubiquitin-conjugating enzyme]-L-cysteine + [acceptor protein]-L-lysine = [E2 ubiquitin-conjugating enzyme]-L-cysteine + N(6)-ubiquitinyl-[acceptor protein]-L-lysine.. Its pathway is protein modification; protein ubiquitination. With respect to regulation, TRIB1 competes with substrates for RFWD2 binding. Functionally, E3 ubiquitin-protein ligase that mediates ubiquitination and subsequent proteasomal degradation of target proteins. E3 ubiquitin ligases accept ubiquitin from an E2 ubiquitin-conjugating enzyme in the form of a thioester and then directly transfers the ubiquitin to targeted substrates. Involved in JUN ubiquitination and degradation. Directly involved in p53 (TP53) ubiquitination and degradation, thereby abolishing p53-dependent transcription and apoptosis. Ubiquitinates p53 independently of MDM2 or RCHY1. Probably mediates E3 ubiquitin ligase activity by functioning as the essential RING domain subunit of larger E3 complexes. In contrast, it does not constitute the catalytic RING subunit in the DCX DET1-COP1 complex that negatively regulates JUN, the ubiquitin ligase activity being mediated by RBX1. Involved in 14-3-3 protein sigma/SFN ubiquitination and proteasomal degradation, leading to AKT activation and promotion of cell survival. Ubiquitinates MTA1 leading to its proteasomal degradation. Upon binding to TRIB1, ubiquitinates CEBPA, which lacks a canonical COP1-binding motif. This is E3 ubiquitin-protein ligase COP1 from Homo sapiens (Human).